The sequence spans 88 residues: Putative membrane protein insertion efficiency factor (88 aa).

Positions 65-88 (LDFVPPKKDKNDDSGHTCKAHHHH) are disordered. The span at 69–80 (PPKKDKNDDSGH) shows a compositional bias: basic and acidic residues.

Belongs to the UPF0161 family.

The protein resides in the cell membrane. Its function is as follows. Could be involved in insertion of integral membrane proteins into the membrane. The polypeptide is Putative membrane protein insertion efficiency factor (Listeria innocua serovar 6a (strain ATCC BAA-680 / CLIP 11262)).